The primary structure comprises 117 residues: Ig heavy chain V region MOO (117 aa).

In terms of domain architecture, Ig-like spans 1–116; sequence EVKLVESGGD…FGQGTIVTVS (116 aa).

The chain is Ig heavy chain V region MOO from Canis lupus familiaris (Dog).